We begin with the raw amino-acid sequence, 156 residues long: Ribosomal RNA large subunit methyltransferase H (156 aa).

Residues leucine 73, glycine 104, and 123–128 (LSPLTL) each bind S-adenosyl-L-methionine.

The protein belongs to the RNA methyltransferase RlmH family. As to quaternary structure, homodimer.

The protein localises to the cytoplasm. It carries out the reaction pseudouridine(1915) in 23S rRNA + S-adenosyl-L-methionine = N(3)-methylpseudouridine(1915) in 23S rRNA + S-adenosyl-L-homocysteine + H(+). Its function is as follows. Specifically methylates the pseudouridine at position 1915 (m3Psi1915) in 23S rRNA. This Hahella chejuensis (strain KCTC 2396) protein is Ribosomal RNA large subunit methyltransferase H.